Here is a 510-residue protein sequence, read N- to C-terminus: NAD(P)H-quinone oxidoreductase subunit 2, chloroplastic (510 aa).

A run of 11 helical transmembrane segments spans residues 24–44 (LLLF…GLIL), 59–79 (WFYF…LFRW), 99–119 (IFQF…VEYI), 124–144 (MAIT…MFLC), 149–169 (LITI…LSGY), 183–203 (YLLM…WLYG), 295–315 (WHLL…LIAI), 323–343 (MLAY…IVGD), 347–367 (GYAS…GTFA), 395–415 (ALSS…AGFF), and 418–438 (LHLF…IGLL).

This sequence belongs to the complex I subunit 2 family. NDH is composed of at least 16 different subunits, 5 of which are encoded in the nucleus.

It is found in the plastid. Its subcellular location is the chloroplast thylakoid membrane. It carries out the reaction a plastoquinone + NADH + (n+1) H(+)(in) = a plastoquinol + NAD(+) + n H(+)(out). It catalyses the reaction a plastoquinone + NADPH + (n+1) H(+)(in) = a plastoquinol + NADP(+) + n H(+)(out). Its function is as follows. NDH shuttles electrons from NAD(P)H:plastoquinone, via FMN and iron-sulfur (Fe-S) centers, to quinones in the photosynthetic chain and possibly in a chloroplast respiratory chain. The immediate electron acceptor for the enzyme in this species is believed to be plastoquinone. Couples the redox reaction to proton translocation, and thus conserves the redox energy in a proton gradient. This Maianthemum racemosum (False Solomon's-seal) protein is NAD(P)H-quinone oxidoreductase subunit 2, chloroplastic.